Here is a 30-residue protein sequence, read N- to C-terminus: Trypsin inhibitor 6 (30 aa).

3 cysteine pairs are disulfide-bonded: cysteine 4/cysteine 21, cysteine 11/cysteine 23, and cysteine 17/cysteine 29.

It belongs to the protease inhibitor I7 (squash-type serine protease inhibitor) family.

The protein resides in the secreted. Strongly inhibits trypsin, weakly inhibits chymotrypsin. The chain is Trypsin inhibitor 6 from Cyclanthera pedata (Achocha).